A 63-amino-acid polypeptide reads, in one-letter code: DNA-directed RNA polymerase subunit omega (63 aa).

The protein belongs to the RNA polymerase subunit omega family. As to quaternary structure, the RNAP catalytic core consists of 2 alpha, 1 beta, 1 beta' and 1 omega subunit. When a sigma factor is associated with the core the holoenzyme is formed, which can initiate transcription.

It carries out the reaction RNA(n) + a ribonucleoside 5'-triphosphate = RNA(n+1) + diphosphate. Promotes RNA polymerase assembly. Latches the N- and C-terminal regions of the beta' subunit thereby facilitating its interaction with the beta and alpha subunits. The protein is DNA-directed RNA polymerase subunit omega of Blochmanniella pennsylvanica (strain BPEN).